Reading from the N-terminus, the 1349-residue chain is Protein strawberry notch homolog 2 (1349 aa).

Disordered regions lie at residues 170–212 (YQSH…QHPD), 609–633 (STRR…PKAS), and 1319–1349 (PTET…FPNS). Residues 177-188 (EEEEGEEEEETE) are compositionally biased toward acidic residues. Residues 609 to 631 (STRRRRDRGGGKRKRRPRGRGPK) show a composition bias toward basic residues.

This sequence belongs to the SBNO family. As to quaternary structure, interacts with TAL1; this interaction inhibits TAL1 occupancy of the DCSTAMP promoter, leading to the activation of the DCSTAMP promoter by the transcription factor MITF. Expressed in the spleen and bone marrow, and to a lesser extent in the kidney, liver, brain, skin, heart and muscle. Expressed predominantly in osteoclasts, and to a lesser extent in T-cells, B-cells and osteoblasts. Expressed in macrophages.

Functionally, acts as a transcriptional coregulator, that can have both coactivator and corepressor functions. Inhibits the DCSTAMP-repressive activity of TAL1, hence enhancing the access of the transcription factor MITF to the DC-STAMP promoter in osteoclast. Plays a role in bone homeostasis; required as a positive regulator in TNFSF11//RANKL-mediated osteoclast fusion via a DCSTAMP-dependent pathway. May also be required in the regulation of osteoblast differentiation. Involved in the transcriptional corepression of NF-kappaB in macrophages. Plays a role as a regulator in the pro-inflammatory cascade. This Mus musculus (Mouse) protein is Protein strawberry notch homolog 2 (Sbno2).